Here is a 296-residue protein sequence, read N- to C-terminus: Small ribosomal subunit protein uS2 (296 aa).

The interval 246 to 272 (QAKDGSVVDSGKGKSIAAHKGGGKASK) is disordered.

It belongs to the universal ribosomal protein uS2 family.

The protein is Small ribosomal subunit protein uS2 of Anaplasma phagocytophilum (strain HZ).